The chain runs to 644 residues: Tubulin--tyrosine ligase-like protein 12 (644 aa).

Basic and acidic residues predominate over residues 1 to 13 (MEAERGPERRPAE). The interval 1 to 25 (MEAERGPERRPAERSSPGQTPEEGA) is disordered. One can recognise a TTL domain in the interval 300–644 (PHGHIFKVYT…PGGCHVTCLV (345 aa)). ATP contacts are provided by residues 450–453 (SKYI), Lys468, and Asp470.

It belongs to the tubulin--tyrosine ligase family. As to quaternary structure, interacts with MAVS; the interaction prevents MAVS binding to TBK1 and IKBKE. Interacts (via N-terminus) with TBK1 (via protein kinase domain). Interacts (via TTL domain) with IKBKE (via protein kinase domain). Interacts with tubulin alpha. Interacts with histone H3 and histone H4 (when trimethylated at 'Lys-20' (H4K20me3)). Interacts with CBX3. Expressed in the basal layer of prostate and endothelial cells. Increased expression in prostatic intraepithelial neoplasia and metastatic lesions.

The protein resides in the cytoplasm. The protein localises to the midbody. It is found in the cytoskeleton. Its subcellular location is the microtubule organizing center. It localises to the centrosome. The protein resides in the spindle. The protein localises to the nucleus. Functionally, negatively regulates post-translational modifications of tubulin, including detyrosination of the C-terminus and polyglutamylation of glutamate residues. Also, indirectly promotes histone H4 trimethylation at 'Lys-20' (H4K20me3). Probably by controlling tubulin and/or histone H4 post-translational modifications, plays a role in mitosis and in maintaining chromosome number stability. During RNA virus-mediated infection, acts as a negative regulator of the RIG-I pathway by preventing MAVS binding to TBK1 and IKBKE. The protein is Tubulin--tyrosine ligase-like protein 12 (TTLL12) of Homo sapiens (Human).